The chain runs to 505 residues: L-carnitine/gamma-butyrobetaine antiporter (505 aa).

A run of 12 helical transmembrane segments spans residues 10 to 30 (IEPK…WLTV), 51 to 71 (WGWA…WLVF), 92 to 112 (IFMM…SIEI), 143 to 163 (GPLP…FFFV), 195 to 215 (FYLV…TPLV), 231 to 251 (LDAI…ACGL), 263 to 283 (SYLS…SFIM), 316 to 336 (WTVF…IFLA), 347 to 367 (LCFG…TVLG), 403 to 423 (LSTA…VTLI), 446 to 466 (LLVR…LLAL), and 475 to 495 (AIIA…LSFI).

It belongs to the BCCT transporter (TC 2.A.15) family. CaiT subfamily. In terms of assembly, homotrimer.

The protein resides in the cell inner membrane. It carries out the reaction 4-(trimethylamino)butanoate(in) + (R)-carnitine(out) = 4-(trimethylamino)butanoate(out) + (R)-carnitine(in). The protein operates within amine and polyamine metabolism; carnitine metabolism. Its function is as follows. Catalyzes the exchange of L-carnitine for gamma-butyrobetaine. The protein is L-carnitine/gamma-butyrobetaine antiporter of Salmonella choleraesuis (strain SC-B67).